A 336-amino-acid polypeptide reads, in one-letter code: Nitrilase (336 aa).

The CN hydrolase domain occupies 5 to 278 (LKVACVQAAP…EGLLYATLDP (274 aa)). Residue E45 is the Proton acceptor of the active site. K127 serves as the catalytic Proton donor. C161 acts as the Nucleophile in catalysis.

Belongs to the carbon-nitrogen hydrolase superfamily. Nitrilase family.

The enzyme catalyses a nitrile + 2 H2O = a carboxylate + NH4(+). It catalyses the reaction (indol-3-yl)acetonitrile + 2 H2O = (indol-3-yl)acetate + NH4(+). It carries out the reaction phenylpropanonitrile + 2 H2O = 3-phenylpropanoate + NH4(+). Arylacetonitrilase which is capable of hydrolyzing indole-3-acetonitrile (IAN) to the plant hormone indole-3-acetate (IAA), and allows the plant pathogenic bacterium to use IAN as a sole nitrogen source. Is also able to hydrolyze phenylpropionitrile (PPN), allowing the use of this compound as a sole nitrogen source. This enzyme may represent an additional mechanism for IAA biosynthesis or may be used to degrade and assimilate aldoximes and nitriles produced during host plant secondary metabolism. The sequence is that of Nitrilase from Pseudomonas syringae pv. syringae (strain B728a).